The primary structure comprises 496 residues: MINKVKGKIIQIIGPVIDVLFENVSSLPMIYDSLEVFNPKGNQIILEVQQHIGECTVRCISMDITDGLKRGQDVFSLGTTISMPIGEEINGRVFNVVGNTIDGLGDLNNSKRISIHRNPPKFEYLSTNIDILYTGIKVIDLVEPYIKGGKIGLFGGAGVGKTVLIQELINNIAKGYGGLSVFAGVGERTREGNDLLREMISSGIIKYGDSFLEDMKNGKWDISKVDKNELKNSKATFVFGQMNEPPGARARVVLSGLTLAEYYRDSFRKGRDVLFFIDNIFRFTQAGSELSALLGRMPSAVGYQPTLASEMGTMQERITSTKNGSITSIQAVYIPADDLSDPAPATTFSHLDATTVLSRKISSLGIYPAVDPLSSTSRILSIEFIGNDHYLCAQRVKQILQRYQELQDIIAILGIEELSEEDKIIVHRARRVQRFLSQPFNVAEQFTGITGKLVNIKDTIEGFNLILDGKLDNIAEVHFNLKGTISEVIDSSKKKI.

155–162 contacts ATP; that stretch reads GGAGVGKT.

It belongs to the ATPase alpha/beta chains family. In terms of assembly, F-type ATPases have 2 components, CF(1) - the catalytic core - and CF(0) - the membrane proton channel. CF(1) has five subunits: alpha(3), beta(3), gamma(1), delta(1), epsilon(1). CF(0) has three main subunits: a(1), b(2) and c(9-12). The alpha and beta chains form an alternating ring which encloses part of the gamma chain. CF(1) is attached to CF(0) by a central stalk formed by the gamma and epsilon chains, while a peripheral stalk is formed by the delta and b chains.

It localises to the cell membrane. The enzyme catalyses ATP + H2O + 4 H(+)(in) = ADP + phosphate + 5 H(+)(out). In terms of biological role, produces ATP from ADP in the presence of a proton gradient across the membrane. The catalytic sites are hosted primarily by the beta subunits. This Karelsulcia muelleri (strain GWSS) (Sulcia muelleri) protein is ATP synthase subunit beta.